Reading from the N-terminus, the 215-residue chain is Large ribosomal subunit protein uL4 (215 aa).

Positions 46 to 72 are disordered; sequence TAKSKNRAEVSGGGRKPWAQKGGGRAR. Gly residues predominate over residues 56-71; sequence SGGGRKPWAQKGGGRA.

Belongs to the universal ribosomal protein uL4 family. As to quaternary structure, part of the 50S ribosomal subunit.

Functionally, one of the primary rRNA binding proteins, this protein initially binds near the 5'-end of the 23S rRNA. It is important during the early stages of 50S assembly. It makes multiple contacts with different domains of the 23S rRNA in the assembled 50S subunit and ribosome. Forms part of the polypeptide exit tunnel. The polypeptide is Large ribosomal subunit protein uL4 (Helicobacter pylori (strain J99 / ATCC 700824) (Campylobacter pylori J99)).